The primary structure comprises 44 residues: Cuticle protein CP466 (44 aa).

2 tandem repeats follow at residues 3 to 20 (LLEGPSGVLFKDGQKKYL) and 27 to 44 (VLLTESGAVLSNGDNVQF).

As to expression, calcified shell.

This is Cuticle protein CP466 from Cancer pagurus (Rock crab).